The chain runs to 547 residues: Dihydrolipoyllysine-residue acetyltransferase component of pyruvate dehydrogenase complex (547 aa).

The Lipoyl-binding 1 domain occupies 2–75 (SELIRVPDIG…KEGDEILELE (74 aa)). Position 41 is an N6-lipoyllysine (Lys41). Residues 75–117 (EVEGGEQPAEAKAEAAPAQPEAPKAEAPAPAPSESKPAAPAAA) form a disordered region. Residues 80–117 (EQPAEAKAEAAPAQPEAPKAEAPAPAPSESKPAAPAAA) show a composition bias toward low complexity. A Lipoyl-binding 2 domain is found at 119–193 (VQDIKVPDIG…GTGDLILKLK (75 aa)). The residue at position 159 (Lys159) is an N6-lipoyllysine. Positions 202 to 231 (EEQPAAAPAQAAAPAAEQKPAAAAPAPAKA) are enriched in low complexity. The tract at residues 202 to 248 (EEQPAAAPAQAAAPAAEQKPAAAAPAPAKADTPAPVGAPSRDGAKVH) is disordered. A Peripheral subunit-binding (PSBD) domain is found at 248–285 (HAGPAVRMLAREFGVELSEVKASGPKGRILKEDVQVFV). Residue His520 is part of the active site.

It belongs to the 2-oxoacid dehydrogenase family. In terms of assembly, forms a 24-polypeptide structural core with octahedral symmetry. (R)-lipoate serves as cofactor.

It catalyses the reaction N(6)-[(R)-dihydrolipoyl]-L-lysyl-[protein] + acetyl-CoA = N(6)-[(R)-S(8)-acetyldihydrolipoyl]-L-lysyl-[protein] + CoA. Functionally, the pyruvate dehydrogenase complex catalyzes the overall conversion of pyruvate to acetyl-CoA and CO(2). It contains multiple copies of three enzymatic components: pyruvate dehydrogenase (E1), dihydrolipoamide acetyltransferase (E2) and lipoamide dehydrogenase (E3). This Pseudomonas aeruginosa (strain ATCC 15692 / DSM 22644 / CIP 104116 / JCM 14847 / LMG 12228 / 1C / PRS 101 / PAO1) protein is Dihydrolipoyllysine-residue acetyltransferase component of pyruvate dehydrogenase complex (aceF).